A 116-amino-acid polypeptide reads, in one-letter code: Large ribosomal subunit protein bL17 (116 aa).

This sequence belongs to the bacterial ribosomal protein bL17 family. In terms of assembly, part of the 50S ribosomal subunit. Contacts protein L32.

This is Large ribosomal subunit protein bL17 from Synechococcus sp. (strain JA-2-3B'a(2-13)) (Cyanobacteria bacterium Yellowstone B-Prime).